Reading from the N-terminus, the 157-residue chain is S-ribosylhomocysteine lyase (157 aa).

Fe cation contacts are provided by histidine 54, histidine 58, and cysteine 126.

This sequence belongs to the LuxS family. In terms of assembly, homodimer. Fe cation serves as cofactor.

The catalysed reaction is S-(5-deoxy-D-ribos-5-yl)-L-homocysteine = (S)-4,5-dihydroxypentane-2,3-dione + L-homocysteine. Functionally, involved in the synthesis of autoinducer 2 (AI-2) which is secreted by bacteria and is used to communicate both the cell density and the metabolic potential of the environment. The regulation of gene expression in response to changes in cell density is called quorum sensing. Catalyzes the transformation of S-ribosylhomocysteine (RHC) to homocysteine (HC) and 4,5-dihydroxy-2,3-pentadione (DPD). The protein is S-ribosylhomocysteine lyase of Bacillus velezensis (strain DSM 23117 / BGSC 10A6 / LMG 26770 / FZB42) (Bacillus amyloliquefaciens subsp. plantarum).